The sequence spans 177 residues: Cytochrome c-type biogenesis protein CcmE (177 aa).

At 1–7 (MTRKSRR) the chain is on the cytoplasmic side. Residues 8–28 (LILIAACGAVLALALGLILSA) traverse the membrane as a helical; Signal-anchor for type II membrane protein segment. At 29–177 (MSGSIVFFRS…DATLGQRSER (149 aa)) the chain is on the periplasmic side. 2 residues coordinate heme: His-122 and Tyr-126. The disordered stretch occupies residues 133 to 177 (DALKAQGRWQEGGSKEAPKDASKAAPKDAAKPETADATLGQRSER). Positions 145 to 166 (GSKEAPKDASKAAPKDAAKPET) are enriched in basic and acidic residues.

It belongs to the CcmE/CycJ family.

Its subcellular location is the cell inner membrane. Heme chaperone required for the biogenesis of c-type cytochromes. Transiently binds heme delivered by CcmC and transfers the heme to apo-cytochromes in a process facilitated by CcmF and CcmH. This chain is Cytochrome c-type biogenesis protein CcmE, found in Methylorubrum extorquens (strain PA1) (Methylobacterium extorquens).